A 132-amino-acid polypeptide reads, in one-letter code: Small ribosomal subunit protein uS8 (132 aa).

The protein belongs to the universal ribosomal protein uS8 family. Part of the 30S ribosomal subunit. Contacts proteins S5 and S12.

One of the primary rRNA binding proteins, it binds directly to 16S rRNA central domain where it helps coordinate assembly of the platform of the 30S subunit. The polypeptide is Small ribosomal subunit protein uS8 (Maricaulis maris (strain MCS10) (Caulobacter maris)).